The following is a 25-amino-acid chain: Cytochrome c oxidase polypeptide VIIc (25 aa).

Residues 1–25 (SHYSEGPGQNLPFSVQNKXRLLGMM) form a disordered region.

This sequence belongs to the cytochrome c oxidase VIIc family. Component of the cytochrome c oxidase (complex IV, CIV), a multisubunit enzyme composed of 14 subunits. The complex is composed of a catalytic core of 3 subunits MT-CO1, MT-CO2 and MT-CO3, encoded in the mitochondrial DNA, and 11 supernumerary subunits COX4I, COX5A, COX5B, COX6A, COX6B, COX6C, COX7A, COX7B, COX7C, COX8 and NDUFA4, which are encoded in the nuclear genome. The complex exists as a monomer or a dimer and forms supercomplexes (SCs) in the inner mitochondrial membrane with NADH-ubiquinone oxidoreductase (complex I, CI) and ubiquinol-cytochrome c oxidoreductase (cytochrome b-c1 complex, complex III, CIII), resulting in different assemblies (supercomplex SCI(1)III(2)IV(1) and megacomplex MCI(2)III(2)IV(2)). Interacts with RAB5IF.

It localises to the mitochondrion inner membrane. The protein operates within energy metabolism; oxidative phosphorylation. Component of the cytochrome c oxidase, the last enzyme in the mitochondrial electron transport chain which drives oxidative phosphorylation. The respiratory chain contains 3 multisubunit complexes succinate dehydrogenase (complex II, CII), ubiquinol-cytochrome c oxidoreductase (cytochrome b-c1 complex, complex III, CIII) and cytochrome c oxidase (complex IV, CIV), that cooperate to transfer electrons derived from NADH and succinate to molecular oxygen, creating an electrochemical gradient over the inner membrane that drives transmembrane transport and the ATP synthase. Cytochrome c oxidase is the component of the respiratory chain that catalyzes the reduction of oxygen to water. Electrons originating from reduced cytochrome c in the intermembrane space (IMS) are transferred via the dinuclear copper A center (CU(A)) of subunit 2 and heme A of subunit 1 to the active site in subunit 1, a binuclear center (BNC) formed by heme A3 and copper B (CU(B)). The BNC reduces molecular oxygen to 2 water molecules using 4 electrons from cytochrome c in the IMS and 4 protons from the mitochondrial matrix. The sequence is that of Cytochrome c oxidase polypeptide VIIc from Oncorhynchus mykiss (Rainbow trout).